The sequence spans 107 residues: uncharacterized protein (107 aa).

This is an uncharacterized protein from Saccharomyces cerevisiae (strain ATCC 204508 / S288c) (Baker's yeast).